We begin with the raw amino-acid sequence, 559 residues long: DNA ligase (559 aa).

Glu-247 contacts ATP. Lys-249 acts as the N6-AMP-lysine intermediate in catalysis. ATP-binding residues include Arg-254, Arg-269, Glu-299, Phe-339, Arg-414, and Lys-420.

Belongs to the ATP-dependent DNA ligase family. Mg(2+) is required as a cofactor.

The catalysed reaction is ATP + (deoxyribonucleotide)n-3'-hydroxyl + 5'-phospho-(deoxyribonucleotide)m = (deoxyribonucleotide)n+m + AMP + diphosphate.. It catalyses the reaction NAD(+) + (deoxyribonucleotide)n-3'-hydroxyl + 5'-phospho-(deoxyribonucleotide)m = (deoxyribonucleotide)n+m + AMP + beta-nicotinamide D-nucleotide.. In terms of biological role, DNA ligase that seals nicks in double-stranded DNA during DNA replication, DNA recombination and DNA repair. Shows high activity with either ATP or NAD(+). This is DNA ligase from Thermococcus fumicolans.